A 964-amino-acid chain; its full sequence is Translation initiation factor IF-2 (964 aa).

A compositionally biased stretch (basic and acidic residues) spans 1-10 (MSDKTNDDKT). A disordered region spans residues 1-379 (MSDKTNDDKT…SQMQETREKI (379 aa)). Residues 27 to 37 (EQSTVRQNFSH) are compositionally biased toward polar residues. Positions 77-102 (APAASTPAPAQAAQPAQAAPVVRAPA) are enriched in low complexity. A compositionally biased stretch (pro residues) spans 103–113 (PATPAPKPAAP). Residues 114–140 (AAPVTKPHVAQQRPAQQRPGGQQAQRP) are compositionally biased toward low complexity. Basic and acidic residues-rich tracts occupy residues 156-227 (SEMD…EAAK) and 234-243 (ARTERRDDAR). A compositionally biased stretch (low complexity) spans 250–278 (RPQQAGRPQGNRPPQGGRPQQGGPRPAAP). The span at 323-338 (PEVRAPKVVKTEDDRR) shows a compositional bias: basic and acidic residues. The region spanning 462–629 (SRPPVVTIMG…AILLQAEILD (168 aa)) is the tr-type G domain. Residues 471–478 (GHVDHGKT) form a G1 region. 471-478 (GHVDHGKT) lines the GTP pocket. Positions 496–500 (GITQH) are G2. The interval 517-520 (DTPG) is G3. Residues 517-521 (DTPGH) and 571-574 (NKID) each bind GTP. Residues 571–574 (NKID) form a G4 region. Residues 607–609 (SAK) form a G5 region.

It belongs to the TRAFAC class translation factor GTPase superfamily. Classic translation factor GTPase family. IF-2 subfamily.

The protein localises to the cytoplasm. One of the essential components for the initiation of protein synthesis. Protects formylmethionyl-tRNA from spontaneous hydrolysis and promotes its binding to the 30S ribosomal subunits. Also involved in the hydrolysis of GTP during the formation of the 70S ribosomal complex. This Brucella anthropi (strain ATCC 49188 / DSM 6882 / CCUG 24695 / JCM 21032 / LMG 3331 / NBRC 15819 / NCTC 12168 / Alc 37) (Ochrobactrum anthropi) protein is Translation initiation factor IF-2.